Reading from the N-terminus, the 326-residue chain is MTRYARIIGTGSYLPPKRVTNHELAAQLAEQGIETSDEWIVTRSGIRARHYAEPDVTCSDLAAKAAERAIEAAGIDRAEIDLILVATSTPDFVFPSAACLVQQKLGLSNHCAAFDLQAVCSGFVYGLATADKFIRAGGYRNALVIGAEVFSRILDFNDRTTCVLFGDGAGAVVLQASDEPGILSTALHADGSHADILCVPGNVAGGAIKGSAFLYMDGQAVFKLAVNVLDKVAREALALAEVESSQIDWLIPHQANIRIMQGTAKKLGLPGERMVVTVDEHGNTSAASIPLALDAAVRDGRIQKGHHVLLEGVGGGFTWGAALLRF.

Active-site residues include cysteine 120 and histidine 253. Residues 254–258 (QANIR) form an ACP-binding region. The active site involves asparagine 283.

It belongs to the thiolase-like superfamily. FabH family. As to quaternary structure, homodimer.

It is found in the cytoplasm. The catalysed reaction is malonyl-[ACP] + acetyl-CoA + H(+) = 3-oxobutanoyl-[ACP] + CO2 + CoA. Its pathway is lipid metabolism; fatty acid biosynthesis. Catalyzes the condensation reaction of fatty acid synthesis by the addition to an acyl acceptor of two carbons from malonyl-ACP. Catalyzes the first condensation reaction which initiates fatty acid synthesis and may therefore play a role in governing the total rate of fatty acid production. Possesses both acetoacetyl-ACP synthase and acetyl transacylase activities. Its substrate specificity determines the biosynthesis of branched-chain and/or straight-chain of fatty acids. The polypeptide is Beta-ketoacyl-[acyl-carrier-protein] synthase III (Ralstonia nicotianae (strain ATCC BAA-1114 / GMI1000) (Ralstonia solanacearum)).